The sequence spans 115 residues: NTF2-related export protein 1 (115 aa).

Residues 7–115 form the NTF2 domain; that stretch reads YAQEFVQRYY…LVLRSSTNFL (109 aa).

Its subcellular location is the nucleus. Functionally, stimulator of protein export for NES-containing proteins. Also plays a role in mRNA nuclear export. The protein is NTF2-related export protein 1 (nxt1) of Schizosaccharomyces pombe (strain 972 / ATCC 24843) (Fission yeast).